The sequence spans 351 residues: Cytoplasmic dynein 2 light intermediate chain 1 (351 aa).

Positions 303 to 335 are disordered; sequence GTLKAVQDPARDPQYAESEVDEMRVQKDQELEH. The span at 323 to 335 shows a compositional bias: basic and acidic residues; that stretch reads DEMRVQKDQELEH.

Belongs to the dynein light intermediate chain family. In terms of assembly, light intermediate chain of the cytoplasmic dynein complex 2, a multisubunit complex composed at least of eleven different proteins. The cytoplasmic dynein 2 complex consists of two catalytic heavy chains (HCs) and a number of non-catalytic subunits presented by intermediate chains (ICs), light intermediate chains (LICs) and light chains (LCs). Among them, a heavy chain (DYNC2H1), two intermediate chains (DYNC2I2 and DYNC2I1), a light intermediate chain (DYNC2LI1), and a light chain (DYNLT2B) are unique to the dynein-2 complex, but a subset of light chains are also shared by dynein-1 and dynein-2 complexes. Dynein-2 complex is built around two copies of cytoplasmic dynein 2 heavy chain 1 (DYNC2H1). The C-terminal region forms the motor domain, which converts the energy from ATP hydrolysis into movement. Its N-terminal region forms the tail, an extended structure that binds the other subunits and holds the two heavy chains in a homodimer. Interacts with DYNC2H1 (via N-terminus); this interaction stabilizes the dynein-2 complex structure. As to expression, specifically expressed by ciliated cells in brain, lung, spleen, testis and kidney (at protein level). Enriched in the ependymal layer lining the lateral ventricles (at protein level).

It is found in the cytoplasm. It localises to the cell projection. Its subcellular location is the cilium. The protein resides in the cytoskeleton. The protein localises to the cilium basal body. It is found in the cilium axoneme. It localises to the microtubule organizing center. Its subcellular location is the centrosome. In terms of biological role, acts as one of several non-catalytic accessory components of the cytoplasmic dynein 2 complex (dynein-2 complex), a motor protein complex that drives the movement of cargos along microtubules within cilia and flagella in concert with the intraflagellar transport (IFT) system, facilitating the assembly of these organelles. Involved in the regulation of ciliary length. This Mus musculus (Mouse) protein is Cytoplasmic dynein 2 light intermediate chain 1 (Dync2li1).